A 271-amino-acid chain; its full sequence is MSRIQQTFAALAQQGRKGLIPFITAGDPDPAKTVEFMHALAAGGADVIELGVPFSDPMADGPVIQRSSERALARGVTLKHVLADVKRFRETNQTTPVVLMGYANPIERHGVDAFAADARAAGVDGVLVVDYPPEEAAVFAEKMRAAGIDPIFLLAPTSTDARIAEVGKIASGYVYYVSLKGVTGAGNLDVSSIAGKIPAIKSRVPVPVGVGFGIRDAETARAVAEVSDAVVIGSRLVQLLESAAPEGAVAALQAFIAELRAALDGAANTAR.

Residues Glu49 and Asp60 each act as proton acceptor in the active site.

The protein belongs to the TrpA family. In terms of assembly, tetramer of two alpha and two beta chains.

It catalyses the reaction (1S,2R)-1-C-(indol-3-yl)glycerol 3-phosphate + L-serine = D-glyceraldehyde 3-phosphate + L-tryptophan + H2O. Its pathway is amino-acid biosynthesis; L-tryptophan biosynthesis; L-tryptophan from chorismate: step 5/5. Functionally, the alpha subunit is responsible for the aldol cleavage of indoleglycerol phosphate to indole and glyceraldehyde 3-phosphate. The protein is Tryptophan synthase alpha chain of Burkholderia multivorans (strain ATCC 17616 / 249).